The primary structure comprises 126 residues: Small ribosomal subunit protein uS13 (126 aa).

Positions G95–K126 are disordered.

Belongs to the universal ribosomal protein uS13 family. Part of the 30S ribosomal subunit. Forms a loose heterodimer with protein S19. Forms two bridges to the 50S subunit in the 70S ribosome.

Functionally, located at the top of the head of the 30S subunit, it contacts several helices of the 16S rRNA. In the 70S ribosome it contacts the 23S rRNA (bridge B1a) and protein L5 of the 50S subunit (bridge B1b), connecting the 2 subunits; these bridges are implicated in subunit movement. Contacts the tRNAs in the A and P-sites. In Acidothermus cellulolyticus (strain ATCC 43068 / DSM 8971 / 11B), this protein is Small ribosomal subunit protein uS13.